The sequence spans 423 residues: Probable electron transfer flavoprotein-quinone oxidoreductase YgcN (423 aa).

I7–L21 provides a ligand contact to FAD.

This sequence belongs to the ETF-QO/FixC family. FAD is required as a cofactor.

Probably accepts electrons from YgcQ/YgcR and reduces a quinone. This is Probable electron transfer flavoprotein-quinone oxidoreductase YgcN (ygcN) from Escherichia coli (strain K12).